Reading from the N-terminus, the 644-residue chain is Pentatricopeptide repeat-containing protein At1g12775, mitochondrial (644 aa).

The transit peptide at 1–53 (MVRMMIRRLSSQASRFVQPRLLETGTLRIALINCPNELLFCCERGFSTFSDRN) directs the protein to the mitochondrion. 15 PPR repeats span residues 87-121 (TVIDFNRLFSAIAKTKQYELVLALCKQMESKGIAH), 122-156 (SIYTLSIMINCFCRCRKLSYAFSTMGKIMKLGYEP), 157-191 (DTVIFNTLLNGLCLECRVSEALELVDRMVEMGHKP), 192-226 (TLITLNTLVNGLCLNGKVSDAVVLIDRMVETGFQP), 227-261 (NEVTYGPVLNVMCKSGQTALAMELLRKMEERNIKL), 262-296 (DAVKYSIIIDGLCKDGSLDNAFNLFNEMEIKGFKA), 297-331 (DIITYNTLIGGFCNAGRWDDGAKLLRDMIKRKISP), 332-366 (NVVTFSVLIDSFVKEGKLREADQLLKEMMQRGIAP), 367-401 (NTITYNSLIDGFCKENRLEEAIQMVDLMISKGCDP), 402-436 (DIMTFNILINGYCKANRIDDGLELFREMSLRGVIA), 437-471 (NTVTYNTLVQGFCQSGKLEVAKKLFQEMVSRRVRP), 472-506 (DIVSYKILLDGLCDNGELEKALEIFGKIEKSKMEL), 507-541 (DIGIYMIIIHGMCNASKVDDAWDLFCSLPLKGVKL), 542-576 (DARAYNIMISELCRKDSLSKADILFRKMTEEGHAP), and 577-611 (DELTYNILIRAHLGDDDATTAAELIEEMKSSGFPA).

Belongs to the PPR family. P subfamily.

Its subcellular location is the mitochondrion. In Arabidopsis thaliana (Mouse-ear cress), this protein is Pentatricopeptide repeat-containing protein At1g12775, mitochondrial.